The sequence spans 59 residues: Cortexin domain containing 2 (59 aa).

Residues 20 to 40 (FAIAFVVLVFVFLIVMVFRCV) form a helical membrane-spanning segment.

It localises to the membrane. The chain is Cortexin domain containing 2 from Mus musculus (Mouse).